We begin with the raw amino-acid sequence, 62 residues long: Phyllokinin-1 (62 aa).

An N-terminal signal peptide occupies residues 1 to 19 (MSFLKKSLFLVLFLGLVSS). Residues 20–48 (SICEEEKRETEEEENEDEIEEESEEKKRE) constitute a propeptide that is removed on maturation. The segment at 22–62 (CEEEKRETEEEENEDEIEEESEEKKREDPERPPGFTPFRVY) is disordered. Residues 30–42 (EEEENEDEIEEES) are compositionally biased toward acidic residues. Over residues 43 to 52 (EEKKREDPER) the composition is skewed to basic and acidic residues. Y62 is subject to Sulfotyrosine; partial.

It belongs to the frog skin active peptide (FSAP) family. Bradykinin-related peptide subfamily. Asp,Pro,Glu-[Thr6,Val10]-phyllokinin and [Thr6,Val10]-phyllokinin occur in sulfated and nonsulfated forms. [Thr6]-bradykinin and Des-Arg-[Thr6]-bradykinin are nonsulfated. As to expression, expressed by the skin glands.

It is found in the secreted. Inhibits ACE with a Ki of 1.6 uM, and targets B2 bradykinin receptor (BDKRB2). Provokes contraction of smooth muscle preparation (ileum). In vivo, induces an early hyperalgesic effects in living rats after intraplantar injection. This is Phyllokinin-1 from Pithecopus azureus (Orange-legged monkey tree frog).